Reading from the N-terminus, the 142-residue chain is Large-conductance mechanosensitive channel (142 aa).

Helical transmembrane passes span 14–34 (VVDL…VSSL) and 86–106 (FGQF…VFLV).

The protein belongs to the MscL family. In terms of assembly, homopentamer.

Its subcellular location is the cell inner membrane. Its function is as follows. Channel that opens in response to stretch forces in the membrane lipid bilayer. May participate in the regulation of osmotic pressure changes within the cell. In Rhizorhabdus wittichii (strain DSM 6014 / CCUG 31198 / JCM 15750 / NBRC 105917 / EY 4224 / RW1) (Sphingomonas wittichii), this protein is Large-conductance mechanosensitive channel.